We begin with the raw amino-acid sequence, 213 residues long: Outer-membrane lipoprotein LolB (213 aa).

Residues 1 to 24 (MNNLSYFTKTKLVWVILSLSLLSA) form the signal peptide. Residue C25 is the site of N-palmitoyl cysteine attachment. C25 carries the S-diacylglycerol cysteine lipid modification.

Belongs to the LolB family. As to quaternary structure, monomer.

The protein resides in the cell outer membrane. Plays a critical role in the incorporation of lipoproteins in the outer membrane after they are released by the LolA protein. This Shewanella woodyi (strain ATCC 51908 / MS32) protein is Outer-membrane lipoprotein LolB.